Reading from the N-terminus, the 399-residue chain is S-adenosylmethionine synthase (399 aa).

His-17 is a binding site for ATP. Residue Asp-19 participates in Mg(2+) binding. Glu-45 contacts K(+). Residues Glu-58 and Gln-101 each coordinate L-methionine. The tract at residues 101-111 is flexible loop; the sequence is QSADIAMGVDQ. ATP contacts are provided by residues 177–179, 244–245, Asp-253, 259–260, Ala-276, and Lys-280; these read DGK, RF, and RK. Asp-253 is a binding site for L-methionine. Lys-284 lines the L-methionine pocket.

Belongs to the AdoMet synthase family. As to quaternary structure, homotetramer; dimer of dimers. It depends on Mg(2+) as a cofactor. Requires K(+) as cofactor.

It localises to the cytoplasm. It catalyses the reaction L-methionine + ATP + H2O = S-adenosyl-L-methionine + phosphate + diphosphate. It participates in amino-acid biosynthesis; S-adenosyl-L-methionine biosynthesis; S-adenosyl-L-methionine from L-methionine: step 1/1. Functionally, catalyzes the formation of S-adenosylmethionine (AdoMet) from methionine and ATP. The overall synthetic reaction is composed of two sequential steps, AdoMet formation and the subsequent tripolyphosphate hydrolysis which occurs prior to release of AdoMet from the enzyme. The chain is S-adenosylmethionine synthase from Bacillus thuringiensis (strain Al Hakam).